The sequence spans 1326 residues: Putative late blight resistance protein homolog R1B-19 (1326 aa).

Coiled coils occupy residues 421–444 (RYSD…ESLQ) and 536–558 (PRMK…KLLN). Residue 570-577 (GMPGLGKT) coordinates ATP. The NB-ARC domain occupies 611 to 864 (LLSLLCDTIG…KVKTCRLHDV (254 aa)). Residues 749 to 770 (SEMEKEVECWEQVANNLGTRIH) adopt a coiled-coil conformation. LRR repeat units follow at residues 953–978 (FKFL…VYLK), 980–996 (FSAH…IYNL), 1027–1050 (LRHL…SAKL), 1053–1070 (LETL…LNFP), 1071–1094 (IRLE…ISAP), 1098–1118 (YLKL…ADHL), 1119–1146 (KNLE…MFPQ), 1167–1191 (FPNL…AMNI), and 1208–1230 (LIEK…AFKR). In terms of domain architecture, HMA spans 1209–1278 (IEKKTLKLNL…AWHARVVVPT (70 aa)).

Belongs to the disease resistance NB-LRR family.

Its subcellular location is the cytoplasm. It localises to the membrane. Its function is as follows. Confers resistance to late blight (Phytophthora infestans) races carrying the avirulence gene Avr1. Resistance proteins guard the plant against pathogens that contain an appropriate avirulence protein via an indirect interaction with this avirulence protein. That triggers a defense system including the hypersensitive response, which restricts the pathogen growth. This Solanum demissum (Wild potato) protein is Putative late blight resistance protein homolog R1B-19 (R1B-19).